Reading from the N-terminus, the 1902-residue chain is MQRKKKGLSILLAGTVALGALAVLPVGEIQAKAAISQQTKGSSLANTVTAATAKQAATDTTAATTNQAIATQLAAKGIDYNKLNKVQQQDIYVDVIVQMSAAPASENGTLRTDYSSTAEIQQETNKVIAAQASVKAAVEQVTQQTAGESYGYVVNGFSTKVRVVDIPKLKQIAGVKTVTLAKVYYPTDAKANSMANVQAVWSNYKYKGEGTVVSVIDSGIDPTHKDMRLSDDKDVKLTKSDVEKFTDTAKHGRYFNSKVPYGFNYADNNDTITDDTVDEQHGMHVAGIIGANGTGDDPAKSVVGVAPEAQLLAMKVFTNSDTSATTGSATLVSAIEDSAKIGADVLNMSLGSDSGNQTLEDPELAAVQNANESGTAAVISAGNSGTSGSATEGVNKDYYGLQDNEMVGTPGTSRGATTVASAENTDVITQAVTITDGTGLQLGPETIQLSSNDFTGSFDQKKFYVVKDASGNLSKGKVADYTADAKGKIAIVKRGELTFADKQKYAQAAGAAGLIIVNNDGTATPVTSMALTTTFPTFGLSSVTGQKLVDWVAAHPDDSLGVKIALTLVPNQKYTEDKMSDFTSYGPVSNLSFKPDITAPGGNIWSTQNNNGYTNMSGTSMASPFIAGSQALLKQALNNKNNPFYAYYKQLKGTALTDFLKTVEMNTAQPINDINYNNVIVSPRRQGAGLVDVKAAIDALEKNPSTVVAENGYPAVELKDFTSTDKTFKLTFTNRTTHELTYQMDSNTDTNAVYTSATDPNSGVLYDKKIDGAAIKAGSNITVPAGKTAQIEFTLSLPKSFDQQQFVEGFLNFKGSDGSRLNLPYMGFFGDWNDGKIVDSLNGITYSPAGGNFGTVPLLTNKNTGTQYYGGMVTDADGNQTVDDQAIAFSSDKNALYNDISMKYYLLRNISNVQVDILDGQGNKVTTLSSSTNRKKTYYNAHSQQYIYYHAPAWDGTYYDQRDGNIKTADDGSYTYRISGVPEGGDKRQVFDVPFKLDSKAPTVRHVALSAKTENGKTQYYLTAEAKDDLSGLDATKSVKTAINEVTNLDATFTDAGTTADGYTKIETPLSDEQAQALGNGDNSAELYLTDNASNATDQDASVQKPGSTSFDLIVNGGGIPDKISSTTTGYEANTQGGGTYTFSGTYPAAVDGTYTDAQGKKHDLNTTYDAATNSFTASMPVTNADYAAQVDLYADKAHTQLLKHFDTKVRLTAPTFTDLKFNNGSDQTSEATIKVTGTVSADTKTVNVGDTVAALDAQHHFSVDVPVNYGDNTIKVTATDEDGNTTTEQKTITSSYDPDMLKNSVTFDQGVTFGANEFNATSAKFYDPKTGIATITGKVKHPTTTLQVDGKQIPIKDDLTFSFTLDLGTLGQKPFGVVVGDTTQNKTFQEALTFILDAVAPTLSLDSSTDAPVYTNNPNFQITGTATDNAQYLSLSINGSSVASQYVDININSGKPGHMAIDQPVKLLEGKNVLTVAVTDSEDNTTTKNITVYYEPKKTLAAPTVTPSTTEPAKTVTLTANSAATGETVQYSADGGKTYQDVPAAGVTVTANGTFKFKSTDLYGNESPAVDYVVTNIKADDPAQLQAAKQELTNLIASAKTLSASGKYDDATTTALAAATQKAQTALDQTNASVDSLTGANRDLQTAINQLAAKLPADKKTSLLNQLQSVKAALETDLGNQTDSSTGKTFTAALDDLVAQAQAGTQTDDQLQATLAKVLDAVLAKLAEGIKAATPAEVGNAKDAATGKTWYADIADTLTSGQASADASDKLAHLQALQSLKTKVAAAVEAAKTVGKGDGTTGTSDKGGGQGTPAPTPGDIGKDKGDEGSQPSSGGNIPTNPATTTSTSTDDTTDRNGQLTSGKGALPKTGETTERPAFGFLGVIVVSLMGVLGLKRKQREE.

Residues 1–33 (MQRKKKGLSILLAGTVALGALAVLPVGEIQAKA) form the signal peptide. Positions 34 to 187 (AISQQTKGSS…VTLAKVYYPT (154 aa)) are excised as a propeptide. The Peptidase S8 domain occupies 191-697 (ANSMANVQAV…AGLVDVKAAI (507 aa)). Catalysis depends on charge relay system residues Asp217, His281, and Ser620. Positions 1796 to 1874 (GKGDGTTGTS…GALPKTGETT (79 aa)) are disordered. Over residues 1797-1812 (KGDGTTGTSDKGGGQG) the composition is skewed to gly residues. The segment covering 1830–1843 (SQPSSGGNIPTNPA) has biased composition (polar residues). Residues 1867–1871 (LPKTG) carry the LPXTG sorting signal motif. A Pentaglycyl murein peptidoglycan amidated threonine modification is found at Thr1870. Residues 1871-1902 (GETTERPAFGFLGVIVVSLMGVLGLKRKQREE) constitute a propeptide, removed by sortase.

The protein belongs to the peptidase S8 family.

The protein resides in the secreted. It localises to the cell wall. It carries out the reaction Endopeptidase activity with very broad specificity, although some subsite preference have been noted, e.g. large hydrophobic residues in the P1 and P4 positions, and Pro in the P2 position. Best known for its action on caseins, although it has been shown to hydrolyze hemoglobin and oxidized insulin B-chain.. Its function is as follows. Protease which breaks down milk proteins during the growth of the bacteria on milk. The polypeptide is PII-type proteinase (prt) (Lactococcus lactis subsp. cremoris (Streptococcus cremoris)).